The primary structure comprises 447 residues: Cobyrinate a,c-diamide synthase (447 aa).

The region spanning 252 to 439 is the GATase cobBQ-type domain; sequence KIAVAFDESF…AHQHCIGNPY (188 aa). Cys331 functions as the Nucleophile in the catalytic mechanism.

Belongs to the CobB/CbiA family. Requires Mg(2+) as cofactor.

It catalyses the reaction cob(II)yrinate + 2 L-glutamine + 2 ATP + 2 H2O = cob(II)yrinate a,c diamide + 2 L-glutamate + 2 ADP + 2 phosphate + 2 H(+). It carries out the reaction Ni-sirohydrochlorin + 2 L-glutamine + 2 ATP + 2 H2O = Ni-sirohydrochlorin a,c-diamide + 2 L-glutamate + 2 ADP + 2 phosphate + 2 H(+). It functions in the pathway cofactor biosynthesis; adenosylcobalamin biosynthesis; cob(II)yrinate a,c-diamide from sirohydrochlorin (anaerobic route): step 10/10. In terms of biological role, catalyzes the ATP-dependent amidation of the two carboxylate groups at positions a and c of cobyrinate, using either L-glutamine or ammonia as the nitrogen source. Involved in the biosynthesis of the unique nickel-containing tetrapyrrole coenzyme F430, the prosthetic group of methyl-coenzyme M reductase (MCR), which plays a key role in methanogenesis and anaerobic methane oxidation. Catalyzes the ATP-dependent amidation of the two carboxylate groups at positions a and c of Ni-sirohydrochlorin, using L-glutamine or ammonia as the nitrogen source. This is Cobyrinate a,c-diamide synthase from Methanococcus maripaludis (strain C7 / ATCC BAA-1331).